The sequence spans 209 residues: V-type ATP synthase subunit D (209 aa).

Belongs to the V-ATPase D subunit family.

Functionally, produces ATP from ADP in the presence of a proton gradient across the membrane. The polypeptide is V-type ATP synthase subunit D (atpD) (Chlamydia pneumoniae (Chlamydophila pneumoniae)).